We begin with the raw amino-acid sequence, 937 residues long: Translation initiation factor IF-2 (937 aa).

2 disordered regions span residues 157 to 230 and 250 to 346; these read KEAQ…AARK and IKAP…ESNF. Residues 173–205 are compositionally biased toward basic and acidic residues; it reads EAQKADAAKPVEAKADESAQEEKKRVAAEESKK. Residues 252-265 are compositionally biased toward low complexity; that stretch reads APEPAAPVAAKPAE. The span at 267 to 293 shows a compositional bias: basic and acidic residues; that stretch reads TLHKPADKKAGEKKDEKKPAVTADKKS. Positions 295 to 304 are enriched in polar residues; it reads KSANVSSTWQ. The tr-type G domain occupies 437–606; that stretch reads PRAPVVTVMG…LLQAEVLELK (170 aa). A G1 region spans residues 446–453; the sequence is GHVDHGKT. 446–453 is a GTP binding site; sequence GHVDHGKT. The interval 471–475 is G2; that stretch reads GITQH. Residues 492-495 form a G3 region; sequence DTPG. GTP-binding positions include 492–496 and 546–549; these read DTPGH and NKID. The tract at residues 546-549 is G4; it reads NKID. The segment at 582 to 584 is G5; the sequence is SAK.

Belongs to the TRAFAC class translation factor GTPase superfamily. Classic translation factor GTPase family. IF-2 subfamily.

The protein localises to the cytoplasm. Its function is as follows. One of the essential components for the initiation of protein synthesis. Protects formylmethionyl-tRNA from spontaneous hydrolysis and promotes its binding to the 30S ribosomal subunits. Also involved in the hydrolysis of GTP during the formation of the 70S ribosomal complex. The protein is Translation initiation factor IF-2 of Janthinobacterium sp. (strain Marseille) (Minibacterium massiliensis).